The primary structure comprises 110 residues: Heat shock protein Hsp-12.2 (110 aa).

One can recognise a sHSP domain in the interval 15–110 (DWPLQHNDGV…VLTITASKKA (96 aa)).

Belongs to the small heat shock protein (HSP20) family.

The polypeptide is Heat shock protein Hsp-12.2 (hsp-12.2) (Caenorhabditis elegans).